The primary structure comprises 232 residues: Golgi SNAP receptor complex member 1 (232 aa).

The Cytoplasmic portion of the chain corresponds to M1–D211. Coiled-coil stretches lie at residues Y6 to K23 and G52 to L80. Residues S212 to N232 traverse the membrane as a helical; Anchor for type IV membrane protein segment.

Belongs to the GOSR1 family. As to quaternary structure, component of several multiprotein Golgi SNARE complexes.

The protein localises to the golgi apparatus membrane. Involved in transport from the ER to the Golgi apparatus as well as in intra-Golgi transport. It belongs to a super-family of proteins called t-SNAREs or soluble NSF (N-ethylmaleimide-sensitive factor) attachment protein receptor. This Drosophila melanogaster (Fruit fly) protein is Golgi SNAP receptor complex member 1 (Gos28).